A 198-amino-acid polypeptide reads, in one-letter code: Phage-like element PBSX protein XkdA (198 aa).

This sequence to B.subtilis YqaB.

This chain is Phage-like element PBSX protein XkdA (xkdA), found in Bacillus subtilis (strain 168).